Here is a 164-residue protein sequence, read N- to C-terminus: Transcription elongation factor GreA (164 aa).

Residues 50–76 (YHAAREEQGQQEARIRQLQELLNNAKV) adopt a coiled-coil conformation.

It belongs to the GreA/GreB family.

Necessary for efficient RNA polymerase transcription elongation past template-encoded arresting sites. The arresting sites in DNA have the property of trapping a certain fraction of elongating RNA polymerases that pass through, resulting in locked ternary complexes. Cleavage of the nascent transcript by cleavage factors such as GreA or GreB allows the resumption of elongation from the new 3'terminus. GreA releases sequences of 2 to 3 nucleotides. The polypeptide is Transcription elongation factor GreA (Mycobacteroides abscessus (strain ATCC 19977 / DSM 44196 / CCUG 20993 / CIP 104536 / JCM 13569 / NCTC 13031 / TMC 1543 / L948) (Mycobacterium abscessus)).